A 65-amino-acid chain; its full sequence is Diapause-specific peptide (65 aa).

The N-terminal stretch at 1 to 24 is a signal peptide; it reads MGAALKMTIFLLIVACAMIATTEA. Disulfide bonds link Cys31/Cys45, Cys35/Cys57, and Cys46/Cys64.

As to expression, highly expressed in the fat body.

The protein localises to the secreted. Functionally, has antifungal activity against T.rubrum. Blocks voltage-dependent N-type calcium channels (Cav2.2 / CACNA1B). This Gastrophysa atrocyanea (Leaf beetle) protein is Diapause-specific peptide.